The chain runs to 503 residues: Lysine--tRNA ligase (503 aa).

The Mg(2+) site is built by E412 and E419.

This sequence belongs to the class-II aminoacyl-tRNA synthetase family. In terms of assembly, homodimer. Mg(2+) serves as cofactor.

It is found in the cytoplasm. The catalysed reaction is tRNA(Lys) + L-lysine + ATP = L-lysyl-tRNA(Lys) + AMP + diphosphate. The chain is Lysine--tRNA ligase from Buchnera aphidicola subsp. Schizaphis graminum (strain Sg).